Reading from the N-terminus, the 215-residue chain is ATP phosphoribosyltransferase (215 aa).

It belongs to the ATP phosphoribosyltransferase family. Short subfamily. In terms of assembly, heteromultimer composed of HisG and HisZ subunits.

The protein localises to the cytoplasm. It catalyses the reaction 1-(5-phospho-beta-D-ribosyl)-ATP + diphosphate = 5-phospho-alpha-D-ribose 1-diphosphate + ATP. Its pathway is amino-acid biosynthesis; L-histidine biosynthesis; L-histidine from 5-phospho-alpha-D-ribose 1-diphosphate: step 1/9. Its function is as follows. Catalyzes the condensation of ATP and 5-phosphoribose 1-diphosphate to form N'-(5'-phosphoribosyl)-ATP (PR-ATP). Has a crucial role in the pathway because the rate of histidine biosynthesis seems to be controlled primarily by regulation of HisG enzymatic activity. This is ATP phosphoribosyltransferase from Cyanothece sp. (strain PCC 7425 / ATCC 29141).